Reading from the N-terminus, the 189-residue chain is Cancer/testis antigen family 45 member A3 (189 aa).

The tract at residues 81–119 is disordered; sequence KDRMMQKPGSNAPVGGNVTSSFSGDDLECRETASSPKSQ.

The protein belongs to the CT45 family. Testis specific. Expressed in cancer cell lines.

Its subcellular location is the nucleus. The sequence is that of Cancer/testis antigen family 45 member A3 from Homo sapiens (Human).